The sequence spans 188 residues: MELLKQRILQDGRCYPGGILKVDSFINHQMDPMLMYKIAEEFIRRFQDRKINKIVTIEASGIAPAIMVGYIMQLPVVFVKKKKPKTMENMLSTVVHSFTKDRDYTVCISNNFLTPEDHILFIDDFLAYGNAAMGMVELAEQSGAVIEGMGFIIEKAFQDGGNLLREKGIRVESLAIIDNLDDCKITVR.

Xanthine-binding residues include leucine 20 and asparagine 27. 127–131 contributes to the 5-phospho-alpha-D-ribose 1-diphosphate binding site; sequence AYGNA. Position 155 (lysine 155) interacts with xanthine.

This sequence belongs to the purine/pyrimidine phosphoribosyltransferase family. Xpt subfamily. As to quaternary structure, homodimer.

The protein resides in the cytoplasm. The catalysed reaction is XMP + diphosphate = xanthine + 5-phospho-alpha-D-ribose 1-diphosphate. The protein operates within purine metabolism; XMP biosynthesis via salvage pathway; XMP from xanthine: step 1/1. In terms of biological role, converts the preformed base xanthine, a product of nucleic acid breakdown, to xanthosine 5'-monophosphate (XMP), so it can be reused for RNA or DNA synthesis. This chain is Xanthine phosphoribosyltransferase, found in Parabacteroides distasonis (strain ATCC 8503 / DSM 20701 / CIP 104284 / JCM 5825 / NCTC 11152).